A 1079-amino-acid chain; its full sequence is Isoleucine--tRNA ligase (1079 aa).

A 'HIGH' region motif is present at residues Pro-53–His-63. A 'KMSKS' region motif is present at residues Lys-611–Arg-615. Lys-614 contacts ATP.

This sequence belongs to the class-I aminoacyl-tRNA synthetase family. IleS type 2 subfamily. Monomer. It depends on Zn(2+) as a cofactor.

Its subcellular location is the cytoplasm. The enzyme catalyses tRNA(Ile) + L-isoleucine + ATP = L-isoleucyl-tRNA(Ile) + AMP + diphosphate. Catalyzes the attachment of isoleucine to tRNA(Ile). As IleRS can inadvertently accommodate and process structurally similar amino acids such as valine, to avoid such errors it has two additional distinct tRNA(Ile)-dependent editing activities. One activity is designated as 'pretransfer' editing and involves the hydrolysis of activated Val-AMP. The other activity is designated 'posttransfer' editing and involves deacylation of mischarged Val-tRNA(Ile). In Rickettsia canadensis (strain McKiel), this protein is Isoleucine--tRNA ligase.